Reading from the N-terminus, the 654-residue chain is Endoplasmic reticulum chaperone BiP (654 aa).

An N-terminal signal peptide occupies residues Met1–Ala18. Positions Met1–Ala80 are required for interaction with ELAPOR1. Residue Gly36–Tyr39 participates in ATP binding. Phosphoserine is present on Ser86. Position 96 (Lys96) interacts with ATP. Position 125 is an N6-acetyllysine (Lys125). A nucleotide-binding (NBD) region spans residues Lys125 to Lys280. Tyr160 bears the 3'-nitrotyrosine mark. Position 213 is an N6-acetyllysine (Lys213). Gly227–Thr229 is an ATP binding site. N6-acetyllysine is present on Lys271. Glu293–Ser300 provides a ligand contact to ATP. The residue at position 326 (Lys326) is an N6-acetyllysine. Residue Lys352 forms a Glycyl lysine isopeptide (Lys-Gly) (interchain with G-Cter in SUMO2) linkage. At Lys353 the chain carries N6-acetyllysine; alternate. A Glycyl lysine isopeptide (Lys-Gly) (interchain with G-Cter in SUMO1); alternate cross-link involves residue Lys353. Residue Gly364–Arg367 coordinates ATP. Residues Gln409–Val419 are interdomain linker. The tract at residues Cys420–Thr500 is substrate-binding (SBD). Lys447 carries the post-translational modification N6-succinyllysine. Arg492 carries the post-translational modification Omega-N-methylarginine. The residue at position 518 (Thr518) is an O-AMP-threonine; alternate. Thr518 carries the post-translational modification Phosphothreonine; alternate. The residue at position 585 (Lys585) is an N6,N6,N6-trimethyllysine; by METTL21A; in vitro. Lys585 is subject to N6,N6-dimethyllysine; alternate. The residue at position 585 (Lys585) is an N6-methyllysine; alternate. Lys591 carries the post-translational modification N6-methyllysine. The disordered stretch occupies residues Lys633 to Leu654. A phosphothreonine mark is found at Thr643 and Thr648. Residues Gly644–Leu654 are compositionally biased toward acidic residues. A Prevents secretion from ER motif is present at residues Lys651–Leu654.

This sequence belongs to the heat shock protein 70 family. As to quaternary structure, monomer and homooligomer; homooligomerization via the interdomain linker inactivates the chaperone activity and acts as a storage of HSPA5/BiP molecules. Interacts with DNAJC1 (via J domain). Component of an EIF2 complex at least composed of CELF1/CUGBP1, CALR, CALR3, EIF2S1, EIF2S2, HSP90B1 and HSPA5. Part of a large chaperone multiprotein complex comprising DNAJB11, HSP90B1, HSPA5, HYOU, PDIA2, PDIA4, PDIA6, PPIB, SDF2L1, UGGT1 and very small amounts of ERP29, but not, or at very low levels, CALR nor CANX. Interacts with TMEM132A and TRIM21. May form a complex with ERLEC1, OS9, SEL1L and SYVN1. Interacts with DNAJC10. Interacts with DNAJB9/ERdj4; leading to recruit HSPA5/BiP to ERN1/IRE1. Interacts with ERN1/IRE1 (via luminal domain); the interaction takes place following interaction with DNAJB9/ERdj4 and leads to inactivate ERN1/IRE1, the interaction also competitively inhibits ERN1 interaction with MANF. Interacts directly with MANF (via SAP domain); the interaction inhibits ATP binding to HSPA5/BiP and subsequent nucleotide exchange. Interacts with EIF2AK3/PERK (via luminal domain); interaction leads to inactivate EIF2AK3/PERK. Interacts with MX1. Interacts with METTL23. Interacts with CEMIP; the interaction induces calcium leakage from the endoplasmic reticulum and cell migration. Interacts with PCSK4 form; the interaction takes place in the endoplasmic reticulum. Interacts with CIPC. Interacts with CCDC88B (via C-terminus); the interaction opposes ERN1-mediated JNK activation, protecting against apoptosis. Interacts with INPP5K; necessary for INPP5K localization at the endoplasmic reticulum. Interacts with MANF; the interaction is direct. Interacts with LOXL2; leading to activate the ERN1/IRE1-XBP1 pathway of the unfolded protein response. Interacts with CLU under stressed condition; interaction increases CLU protein stability; facilitates its retrotranslocation and redistribution to the mitochondria; cooperatively suppress stress-induced apoptosis by stabilizing mitochondrial membrane integrity. Interacts with CCDC47. Interacts with CLN3. Interacts with ELAPOR1; may regulate the function of HSPA5 in apoptosis and cell proliferation. Interacts with CASP7. Interacts with ILDR2; the interaction stabilizes ILDR2 expression. Interacts with ADAM7. Post-translationally, in unstressed cells, AMPylation at Thr-518 by FICD inactivates the chaperome activity: AMPylated form is locked in a relatively inert state and only weakly stimulated by J domain-containing proteins. In response to endoplasmic reticulum stress, de-AMPylation by the same protein, FICD, restores the chaperone activity.

The protein localises to the endoplasmic reticulum lumen. It is found in the melanosome. Its subcellular location is the cytoplasm. It localises to the cell surface. It catalyses the reaction ATP + H2O = ADP + phosphate + H(+). Its activity is regulated as follows. The chaperone activity is regulated by ATP-induced allosteric coupling of the nucleotide-binding (NBD) and substrate-binding (SBD) domains. In the ADP-bound and nucleotide-free (apo) states, the two domains have little interaction. In contrast, in the ATP-bound state the two domains are tightly coupled, which results in drastically accelerated kinetics in both binding and release of polypeptide substrates. J domain-containing co-chaperones (DNAJB9/ERdj4 or DNAJC10/ERdj5) stimulate the ATPase activity and are required for efficient substrate recognition by HSPA5/BiP. Homooligomerization inactivates participating HSPA5/BiP protomers and probably act as reservoirs to store HSPA5/BiP molecules when they are not needed by the cell. Endoplasmic reticulum chaperone that plays a key role in protein folding and quality control in the endoplasmic reticulum lumen. Involved in the correct folding of proteins and degradation of misfolded proteins via its interaction with DNAJC10/ERdj5, probably to facilitate the release of DNAJC10/ERdj5 from its substrate. Acts as a key repressor of the EIF2AK3/PERK and ERN1/IRE1-mediated unfolded protein response (UPR). In the unstressed endoplasmic reticulum, recruited by DNAJB9/ERdj4 to the luminal region of ERN1/IRE1, leading to disrupt the dimerization of ERN1/IRE1, thereby inactivating ERN1/IRE1. Also binds and inactivates EIF2AK3/PERK in unstressed cells. Accumulation of misfolded protein in the endoplasmic reticulum causes release of HSPA5/BiP from ERN1/IRE1 and EIF2AK3/PERK, allowing their homodimerization and subsequent activation. Plays an auxiliary role in post-translational transport of small presecretory proteins across endoplasmic reticulum (ER). May function as an allosteric modulator for SEC61 channel-forming translocon complex, likely cooperating with SEC62 to enable the productive insertion of these precursors into SEC61 channel. Appears to specifically regulate translocation of precursors having inhibitory residues in their mature region that weaken channel gating. May also play a role in apoptosis and cell proliferation. The sequence is that of Endoplasmic reticulum chaperone BiP from Pongo abelii (Sumatran orangutan).